Consider the following 287-residue polypeptide: N-methyltransferase verN (287 aa).

This sequence belongs to the methyltransferase superfamily. LaeA methyltransferase family.

It functions in the pathway mycotoxin biosynthesis. Functionally, N-methyltransferase; part of the gene cluster that mediates the biosynthesis of 11'-deoxyverticillin A, one of the dimeric epipolythiodioxopiperazines (ETPs) from the verticillin family that act as mycotoxins. 11'-deoxyverticillin A is required for normal conidiation. The nonribosomal peptide synthetase verP is speculated to be responsible for condensation of amino acids to form the carbon skeleton of verticillin, whereas the cluster-specific tailoring enzymes are involved in further modifications leading to the production of 11'-deoxyverticillin A. This is N-methyltransferase verN from Clonostachys rogersoniana.